A 369-amino-acid chain; its full sequence is Dehydrogenase pigH (369 aa).

Residues 13 to 367 (KAPLLEVKAA…QGVSAKKIVV (355 aa)) enclose the Enoyl reductase (ER) domain. 44–49 (IDWLIQ) contributes to the NADP(+) binding site. 2 N-linked (GlcNAc...) asparagine glycosylation sites follow: N79 and N101. NADP(+)-binding positions include 197 to 200 (SRKN) and Y215. A helical transmembrane segment spans residues 280–300 (TIIFFVSWIISFKFKGLLKGI). NADP(+) is bound at residue 360–361 (VS).

This sequence belongs to the zinc-containing alcohol dehydrogenase family.

The protein resides in the membrane. Its pathway is secondary metabolite biosynthesis. In terms of biological role, dehydrogenase; part of the gene cluster that mediates the biosynthesis of azaphilone pigments (MonAzPs), a complex mixture of compounds with a common azaphilone skeleton very widely used as food colorants. Within the pathway, pigH might be involved in the late steps of yellow pigments monascin and ankaflavin biosynthesis. The first step of the pathway is performed by the nrPKS pigA that forms the hexaketide precursor from successive condensations of five malonyl-CoA units, with a simple acetyl-CoA starter unit. The role of esterase pigG is not clear, but it may play at most a supplementary role in the formation of the benzaldehyde produced by the pigA nrPKS. This very reactive benzaldehyde is intercepted by the pigC ketoreductase that to provide the first stable enzyme-free MonAzPs intermediate, 6-(4-hydroxy-2-oxopentyl)-3-methyl-2,4-dioxocyclohexane carbaldehyde, also known as M7PKS-1. The FAD-dependent monooxygenase pigN hydroxylates M7PKS-1 at C-4, which triggers the formation of the pyran ring. PigJ, pigK and pigD are involved in the acetylation of the pyran ring. PigJ and pigK form the two subunits of a dedicated fungal FAS that produces the side chain fatty acyl moiety of MonAzPs and pigD transfers the fatty acyl chain to the C-4 alcohol. PigM and pigO are involved in the elimination of the omega-1 alcohol. PigM acts as an O-acetyltransferase that synthesizes the putative O-11 acetyl intermediate whereas pigO eliminates acetic acid to yield an intermediate with a C10(11) double bond. The dehydration of the C-11 alcohol followed by the reduction of the C6(7) double bond by the NAD(P)H-dependent oxidoreductase pigE increases the electrophilicity of the C-5 ketone of the resulting acyl benzopyran. This in turn sets up the C-5 ketone for an intramolecular Knoevenagel aldol condensation with the C-20 enol of the side chain. This condensation affords the characteristic linear tricyclic carbon skeletons of the yellow pigments that serve as the common precursors for the classical yellow pigments monascin and ankaflavin, orange pigments rubopunctatin and monascorubrin, and red pigments ribropunctamine and monascorubramine. The FAD-dependent oxidoreductase pigF is especially invoved in the biosynthesis of orange and red pigments via desaturation of C6(7). In Monascus ruber (Mold), this protein is Dehydrogenase pigH.